A 150-amino-acid chain; its full sequence is Ubiquitin-conjugating enzyme E2 3 (150 aa).

A UBC core domain is found at 4 to 150 (PAKKRLMWDF…VIEIVEQSYV (147 aa)). Cysteine 88 functions as the Glycyl thioester intermediate in the catalytic mechanism.

It belongs to the ubiquitin-conjugating enzyme family. In terms of tissue distribution, expressed in all tissues examined. Lower levels found in leaves.

It catalyses the reaction S-ubiquitinyl-[E1 ubiquitin-activating enzyme]-L-cysteine + [E2 ubiquitin-conjugating enzyme]-L-cysteine = [E1 ubiquitin-activating enzyme]-L-cysteine + S-ubiquitinyl-[E2 ubiquitin-conjugating enzyme]-L-cysteine.. It participates in protein modification; protein ubiquitination. Its function is as follows. Accepts the ubiquitin from the E1 complex and catalyzes its covalent attachment to other proteins. The chain is Ubiquitin-conjugating enzyme E2 3 (UBC3) from Arabidopsis thaliana (Mouse-ear cress).